Here is a 331-residue protein sequence, read N- to C-terminus: Phosphoribosylformylglycinamidine cyclo-ligase (331 aa).

This sequence belongs to the AIR synthase family.

It is found in the cytoplasm. The enzyme catalyses 2-formamido-N(1)-(5-O-phospho-beta-D-ribosyl)acetamidine + ATP = 5-amino-1-(5-phospho-beta-D-ribosyl)imidazole + ADP + phosphate + H(+). It functions in the pathway purine metabolism; IMP biosynthesis via de novo pathway; 5-amino-1-(5-phospho-D-ribosyl)imidazole from N(2)-formyl-N(1)-(5-phospho-D-ribosyl)glycinamide: step 2/2. This is Phosphoribosylformylglycinamidine cyclo-ligase from Clostridium botulinum (strain ATCC 19397 / Type A).